The primary structure comprises 387 residues: MSAVSVYPMCVRASRGLLRLRQGARCSTAPPLLDVVRPLSADTSSSSATGGLAQAILQERLQQQQKSQEQPPPEGEDSGHKQDEQGEDKKQKENTAYAKKMVLRLAGIMGLGGTVGIVYIFGSNSVDEQGNKIPDEFDNDVPVIQQLRRTFKYFKDYRQMIIEPTSPKLLPDPLREPYYQPPYTLVLELTDVLLHPEWSLATGWRFKKRPGIDYLFQQLAPLYEIVIFTSETGMTAYPLIDSIDPQGFVMYRLFRDATRYMEGHHVKDVSCLNRDTSKVIVVDCKREAFGLQPFNGLALCKWDGNSEDRTLYDLAAFLKTIATSGVEDVRSVLENYAHEEDPIEAFKRRQAQLAREEEQRISEMAQQKKQGFSLGTIAGRFWSRKQQ.

The N-terminal 26 residues, M1–C26, are a transit peptide targeting the mitochondrion. Residues S27–K100 are Mitochondrial matrix-facing. The interval L61–E93 is disordered. A compositionally biased stretch (basic and acidic residues) spans D77–E93. Residues M101–F121 form a helical membrane-spanning segment. Residues G122–Q387 lie on the Mitochondrial intermembrane side of the membrane. The 144-residue stretch at Y178–I321 folds into the FCP1 homology domain.

The protein belongs to the TIM50 family. As to quaternary structure, component of the TIM23 complex at least composed of timm23, timm17 and timm50.

Its subcellular location is the mitochondrion inner membrane. Its function is as follows. Essential component of the TIM23 complex, a complex that mediates the translocation of transit peptide-containing proteins across the mitochondrial inner membrane. This is Mitochondrial import inner membrane translocase subunit TIM50 (timm50) from Danio rerio (Zebrafish).